Reading from the N-terminus, the 264-residue chain is Acid phosphatase (264 aa).

Positions 1–28 are cleaved as a signal peptide; the sequence is MIKVPRFICMIALTSGILASGLSQSVSA.

This sequence belongs to the class A bacterial acid phosphatase family. The cofactor is Mg(2+). Zn(2+) is required as a cofactor.

It localises to the periplasm. It carries out the reaction a phosphate monoester + H2O = an alcohol + phosphate. This chain is Acid phosphatase (phoC), found in Zymomonas mobilis subsp. mobilis (strain ATCC 31821 / ZM4 / CP4).